The primary structure comprises 126 residues: Prostate and testis expressed protein 1 (126 aa).

The first 21 residues, 1 to 21 (MDKSLLLELPILLCCFRALSG), serve as a signal peptide directing secretion. A UPAR/Ly6 domain is found at 46 to 125 (VQCRMCHLQF…CRSHDLCNED (80 aa)). Intrachain disulfides connect Cys-48-Cys-75, Cys-51-Cys-60, Cys-67-Cys-94, and Cys-98-Cys-115.

It belongs to the PATE family. In terms of tissue distribution, expressed specifically in prostate cancer, normal prostate, and testis. Expressed in the epithelial cells of the prostate cancer and normal prostate tissues.

The protein resides in the secreted. This is Prostate and testis expressed protein 1 (PATE1) from Homo sapiens (Human).